Here is a 381-residue protein sequence, read N- to C-terminus: Queuine tRNA-ribosyltransferase (381 aa).

Aspartate 92 functions as the Proton acceptor in the catalytic mechanism. Residues aspartate 92–phenylalanine 96, aspartate 146, glutamine 190, and glycine 217 each bind substrate. The segment at glycine 248–aspartate 254 is RNA binding. The Nucleophile role is filled by aspartate 267. The segment at threonine 272–arginine 276 is RNA binding; important for wobble base 34 recognition. Positions 305, 307, 310, and 337 each coordinate Zn(2+).

It belongs to the queuine tRNA-ribosyltransferase family. In terms of assembly, homodimer. Within each dimer, one monomer is responsible for RNA recognition and catalysis, while the other monomer binds to the replacement base PreQ1. Requires Zn(2+) as cofactor.

The catalysed reaction is 7-aminomethyl-7-carbaguanine + guanosine(34) in tRNA = 7-aminomethyl-7-carbaguanosine(34) in tRNA + guanine. It functions in the pathway tRNA modification; tRNA-queuosine biosynthesis. Catalyzes the base-exchange of a guanine (G) residue with the queuine precursor 7-aminomethyl-7-deazaguanine (PreQ1) at position 34 (anticodon wobble position) in tRNAs with GU(N) anticodons (tRNA-Asp, -Asn, -His and -Tyr). Catalysis occurs through a double-displacement mechanism. The nucleophile active site attacks the C1' of nucleotide 34 to detach the guanine base from the RNA, forming a covalent enzyme-RNA intermediate. The proton acceptor active site deprotonates the incoming PreQ1, allowing a nucleophilic attack on the C1' of the ribose to form the product. After dissociation, two additional enzymatic reactions on the tRNA convert PreQ1 to queuine (Q), resulting in the hypermodified nucleoside queuosine (7-(((4,5-cis-dihydroxy-2-cyclopenten-1-yl)amino)methyl)-7-deazaguanosine). In Xanthomonas euvesicatoria pv. vesicatoria (strain 85-10) (Xanthomonas campestris pv. vesicatoria), this protein is Queuine tRNA-ribosyltransferase.